A 455-amino-acid chain; its full sequence is DENN domain-containing protein 11 (455 aa).

The segment at 1 to 59 is disordered; sequence MVEQGDAAPLLRWAEGPAVSVPQDPALQAGGWVRGGSGEGRVAAEAPRRREPDEPAPPE. Val2 carries the post-translational modification N-acetylvaline. The uDENN domain maps to 15–187; the sequence is EGPAVSVPQD…QLEMPGHYSH (173 aa). Arg41 bears the Omega-N-methylarginine mark. One can recognise a cDENN domain in the interval 214–362; it reads WLPSIHRYMY…INSADREKYR (149 aa). The region spanning 364–455 is the dDENN domain; it reads LNEQRQMLLY…MLVIDNPCCP (92 aa).

It belongs to the DENND11 family.

Its function is as follows. Probable guanine nucleotide exchange factor (GEF). May promote the exchange of GDP to GTP, converting inactive GDP-bound small GTPases into their active GTP-bound form. May play a role in neuritogenesis, as well as in neuronal recovery and/or restructuring in the hippocampus following transient cerebral ischemia. This Mus musculus (Mouse) protein is DENN domain-containing protein 11 (Dennd11).